The following is a 609-amino-acid chain: Proteasome-associated ATPase (609 aa).

Positions 1-22 are disordered; it reads MGESERSEAFNPPREAGMSSGD. The stretch at 20-96 forms a coiled coil; it reads SGDIAELEQL…LREEVDRLGQ (77 aa). 296–301 is an ATP binding site; sequence GCGKTL. The docks into pockets in the proteasome alpha-ring stretch occupies residues 608-609; that stretch reads YL.

It belongs to the AAA ATPase family. As to quaternary structure, homohexamer. Assembles into a hexameric ring structure that caps the 20S proteasome core. Strongly interacts with the prokaryotic ubiquitin-like protein Pup through a hydrophobic interface; the interacting region of ARC lies in its N-terminal coiled-coil domain. There is one Pup binding site per ARC hexamer ring. Upon ATP-binding, the C-terminus of ARC interacts with the alpha-rings of the proteasome core, possibly by binding to the intersubunit pockets.

The protein operates within protein degradation; proteasomal Pup-dependent pathway. Functionally, ATPase which is responsible for recognizing, binding, unfolding and translocation of pupylated proteins into the bacterial 20S proteasome core particle. May be essential for opening the gate of the 20S proteasome via an interaction with its C-terminus, thereby allowing substrate entry and access to the site of proteolysis. Thus, the C-termini of the proteasomal ATPase may function like a 'key in a lock' to induce gate opening and therefore regulate proteolysis. This Mycobacterium leprae (strain Br4923) protein is Proteasome-associated ATPase.